The sequence spans 698 residues: Protein artemis (698 aa).

Thr380 carries the phosphothreonine modification. Ser385 bears the Phosphoserine mark. Disordered regions lie at residues 445 to 485, 505 to 595, and 620 to 669; these read ANFV…DPDV, LENL…DSIS, and NGVP…LPKP. Over residues 449–461 the composition is skewed to acidic residues; that stretch reads DCDESNSDSEGEL. Over residues 508 to 521 the composition is skewed to polar residues; that stretch reads LPSSIETGGSQSPK. The segment covering 538 to 551 has biased composition (low complexity); the sequence is THISSQNSSQSTHI. Over residues 552–583 the composition is skewed to polar residues; that stretch reads TDQGSQGWDSQCDTVLLSSQEKSGGDSTSLNK. Residues 641–655 are compositionally biased toward low complexity; it reads TSLTSTQADSQSSSD. Ser650 bears the Phosphoserine; by ATM mark.

It belongs to the DNA repair metallo-beta-lactamase (DRMBL) family. Interacts with LIG4; the interaction is direct. Interacts with ATM. Interacts with BRCA1. Interacts with PRKDC. Interacts with TP53BP1. Also exhibits ATM- and phosphorylation-dependent interaction with the MRN complex, composed of MRE11, RAD50, and NBN. Post-translationally, phosphorylation on undefined residues by PRKDC may stimulate endonucleolytic activity on 5' and 3' hairpins and overhangs. PRKDC must remain present, even after phosphorylation, for efficient hairpin opening. Also phosphorylated by ATM in response to ionizing radiation (IR) and by ATR in response to ultraviolet (UV) radiation.

The protein localises to the nucleus. Functionally, required for V(D)J recombination, the process by which exons encoding the antigen-binding domains of immunoglobulins and T-cell receptor proteins are assembled from individual V, (D), and J gene segments. V(D)J recombination is initiated by the lymphoid specific RAG endonuclease complex, which generates site specific DNA double strand breaks (DSBs). These DSBs present two types of DNA end structures: hairpin sealed coding ends and phosphorylated blunt signal ends. These ends are independently repaired by the non homologous end joining (NHEJ) pathway to form coding and signal joints respectively. This protein exhibits single-strand specific 5'-3' exonuclease activity in isolation, and acquires endonucleolytic activity on 5' and 3' hairpins and overhangs when in a complex with PRKDC. The latter activity is required specifically for the resolution of closed hairpins prior to the formation of the coding joint. May also be required for the repair of complex DSBs induced by ionizing radiation, which require substantial end-processing prior to religation by NHEJ. This chain is Protein artemis (Dclre1c), found in Rattus norvegicus (Rat).